The chain runs to 91 residues: Cell division protein CrgA (91 aa).

The segment covering 1–24 has biased composition (polar residues); sequence MPKSKITTEGSALPQSSSSATNRT. The interval 1–28 is disordered; that stretch reads MPKSKITTEGSALPQSSSSATNRTPVKI. 2 helical membrane-spanning segments follow: residues 38-58 and 68-88; these read IAIMLGLMLLGLLWLVVNYLA and LGPWNYGIGFGLAIIGLLMTM.

This sequence belongs to the CrgA family.

It localises to the cell membrane. Its function is as follows. Involved in cell division. The sequence is that of Cell division protein CrgA from Corynebacterium aurimucosum (strain ATCC 700975 / DSM 44827 / CIP 107346 / CN-1) (Corynebacterium nigricans).